Reading from the N-terminus, the 261-residue chain is Proteasome subunit alpha type-4 (261 aa).

2 positions are modified to phosphoserine: Ser-13 and Ser-75. An N6-acetyllysine modification is found at Lys-127. Ser-173 is modified (phosphoserine). Residue Lys-176 is modified to N6-acetyllysine. Positions 240–261 are disordered; that stretch reads HEEEEAKAEREKKEKEQREKDK.

The protein belongs to the peptidase T1A family. As to quaternary structure, the 26S proteasome consists of a 20S proteasome core and two 19S regulatory subunits. The 20S proteasome core is a barrel-shaped complex made of 28 subunits that are arranged in four stacked rings. The two outer rings are each formed by seven alpha subunits, and the two inner rings are formed by seven beta subunits. The proteolytic activity is exerted by three beta-subunits PSMB5, PSMB6 and PSMB7. Ubiquitous.

It localises to the cytoplasm. The protein resides in the nucleus. Functionally, component of the 20S core proteasome complex involved in the proteolytic degradation of most intracellular proteins. This complex plays numerous essential roles within the cell by associating with different regulatory particles. Associated with two 19S regulatory particles, forms the 26S proteasome and thus participates in the ATP-dependent degradation of ubiquitinated proteins. The 26S proteasome plays a key role in the maintenance of protein homeostasis by removing misfolded or damaged proteins that could impair cellular functions, and by removing proteins whose functions are no longer required. Associated with the PA200 or PA28, the 20S proteasome mediates ubiquitin-independent protein degradation. This type of proteolysis is required in several pathways including spermatogenesis (20S-PA200 complex) or generation of a subset of MHC class I-presented antigenic peptides (20S-PA28 complex). This Rattus norvegicus (Rat) protein is Proteasome subunit alpha type-4 (Psma4).